Reading from the N-terminus, the 247-residue chain is UPF0246 protein LSL_1719 (247 aa).

It belongs to the UPF0246 family.

The protein is UPF0246 protein LSL_1719 of Ligilactobacillus salivarius (strain UCC118) (Lactobacillus salivarius).